Reading from the N-terminus, the 31-residue chain is Cyclotide vico-A (31 aa).

Residues 1–31 (GSIPCAESCVYIPCFTGIAGCSCKNKVCYYN) constitute a cross-link (cyclopeptide (Gly-Asn)). 3 disulfides stabilise this stretch: Cys5–Cys21, Cys9–Cys23, and Cys14–Cys28.

This sequence belongs to the cyclotide family. Bracelet subfamily. Post-translationally, this is a cyclic peptide.

Functionally, probably participates in a plant defense mechanism. This Viola cotyledon (Violeta) protein is Cyclotide vico-A.